The following is a 302-amino-acid chain: Sulfate adenylyltransferase subunit 2 (302 aa).

This sequence belongs to the PAPS reductase family. CysD subfamily. Heterodimer composed of CysD, the smaller subunit, and CysN.

The enzyme catalyses sulfate + ATP + H(+) = adenosine 5'-phosphosulfate + diphosphate. It participates in sulfur metabolism; hydrogen sulfide biosynthesis; sulfite from sulfate: step 1/3. Its function is as follows. With CysN forms the ATP sulfurylase (ATPS) that catalyzes the adenylation of sulfate producing adenosine 5'-phosphosulfate (APS) and diphosphate, the first enzymatic step in sulfur assimilation pathway. APS synthesis involves the formation of a high-energy phosphoric-sulfuric acid anhydride bond driven by GTP hydrolysis by CysN coupled to ATP hydrolysis by CysD. The chain is Sulfate adenylyltransferase subunit 2 from Methylococcus capsulatus (strain ATCC 33009 / NCIMB 11132 / Bath).